The following is a 50-amino-acid chain: uncharacterized protein (50 aa).

The interval 28–50 (SKLSPVTNGGKTIGKSNKVSKND) is disordered. Polar residues predominate over residues 29 to 50 (KLSPVTNGGKTIGKSNKVSKND).

This is an uncharacterized protein from Haemophilus influenzae (strain ATCC 51907 / DSM 11121 / KW20 / Rd).